A 214-amino-acid polypeptide reads, in one-letter code: Adenylate kinase (214 aa).

Position 10–15 (10–15 (GVGKGT)) interacts with ATP. An NMP region spans residues 30-59 (STGDILRAAVKELTPMGAKAKGYMDSGALV). Residues Thr-31, Arg-36, 57–59 (ALV), 85–88 (GFPR), and Gln-92 contribute to the AMP site. An LID region spans residues 126 to 163 (GRRACANCGAGYHVDFAPSKVAGVCDACSGQLVQREDD). Arg-127 is an ATP binding site. The Zn(2+) site is built by Cys-130, Cys-133, Cys-150, and Cys-153. Residues Arg-160 and Arg-171 each coordinate AMP. Gly-199 contacts ATP.

The protein belongs to the adenylate kinase family. Monomer.

The protein localises to the cytoplasm. It catalyses the reaction AMP + ATP = 2 ADP. It participates in purine metabolism; AMP biosynthesis via salvage pathway; AMP from ADP: step 1/1. In terms of biological role, catalyzes the reversible transfer of the terminal phosphate group between ATP and AMP. Plays an important role in cellular energy homeostasis and in adenine nucleotide metabolism. The chain is Adenylate kinase from Geobacter sp. (strain M21).